We begin with the raw amino-acid sequence, 477 residues long: Ribulose bisphosphate carboxylase large chain (477 aa).

Positions 1 to 2 (MS) are excised as a propeptide. Pro3 carries the N-acetylproline modification. Residue Lys14 is modified to N6,N6,N6-trimethyllysine. Residues Asn123 and Thr173 each contribute to the substrate site. Lys175 acts as the Proton acceptor in catalysis. Lys177 is a substrate binding site. Positions 201, 203, and 204 each coordinate Mg(2+). Position 201 is an N6-carboxylysine (Lys201). Residue His294 is the Proton acceptor of the active site. 3 residues coordinate substrate: Arg295, His327, and Ser379.

The protein belongs to the RuBisCO large chain family. Type I subfamily. In terms of assembly, heterohexadecamer of 8 large chains and 8 small chains; disulfide-linked. The disulfide link is formed within the large subunit homodimers. Mg(2+) serves as cofactor. In terms of processing, the disulfide bond which can form in the large chain dimeric partners within the hexadecamer appears to be associated with oxidative stress and protein turnover.

It is found in the plastid. The protein localises to the chloroplast. The catalysed reaction is 2 (2R)-3-phosphoglycerate + 2 H(+) = D-ribulose 1,5-bisphosphate + CO2 + H2O. It catalyses the reaction D-ribulose 1,5-bisphosphate + O2 = 2-phosphoglycolate + (2R)-3-phosphoglycerate + 2 H(+). Its function is as follows. RuBisCO catalyzes two reactions: the carboxylation of D-ribulose 1,5-bisphosphate, the primary event in carbon dioxide fixation, as well as the oxidative fragmentation of the pentose substrate in the photorespiration process. Both reactions occur simultaneously and in competition at the same active site. This is Ribulose bisphosphate carboxylase large chain from Nicotiana debneyi (Debney's tobacco).